Here is a 160-residue protein sequence, read N- to C-terminus: SsrA-binding protein (160 aa).

Residues 134-160 (YDKRDTERERDSNRELHRAVRNKGKED) are disordered.

It belongs to the SmpB family.

The protein resides in the cytoplasm. Functionally, required for rescue of stalled ribosomes mediated by trans-translation. Binds to transfer-messenger RNA (tmRNA), required for stable association of tmRNA with ribosomes. tmRNA and SmpB together mimic tRNA shape, replacing the anticodon stem-loop with SmpB. tmRNA is encoded by the ssrA gene; the 2 termini fold to resemble tRNA(Ala) and it encodes a 'tag peptide', a short internal open reading frame. During trans-translation Ala-aminoacylated tmRNA acts like a tRNA, entering the A-site of stalled ribosomes, displacing the stalled mRNA. The ribosome then switches to translate the ORF on the tmRNA; the nascent peptide is terminated with the 'tag peptide' encoded by the tmRNA and targeted for degradation. The ribosome is freed to recommence translation, which seems to be the essential function of trans-translation. The polypeptide is SsrA-binding protein (Pseudomonas fluorescens (strain SBW25)).